The following is a 407-amino-acid chain: Acetate kinase (407 aa).

Asparagine 10 serves as a coordination point for Mg(2+). Lysine 17 lines the ATP pocket. Arginine 93 is a binding site for substrate. Residue aspartate 150 is the Proton donor/acceptor of the active site. Residues 210–214, 284–286, and 332–336 each bind ATP; these read HLGNG, DMR, and GVGEN. Residue glutamate 386 coordinates Mg(2+).

It belongs to the acetokinase family. In terms of assembly, homodimer. Mg(2+) serves as cofactor. The cofactor is Mn(2+).

The protein resides in the cytoplasm. It carries out the reaction acetate + ATP = acetyl phosphate + ADP. It functions in the pathway metabolic intermediate biosynthesis; acetyl-CoA biosynthesis; acetyl-CoA from acetate: step 1/2. Catalyzes the formation of acetyl phosphate from acetate and ATP. Can also catalyze the reverse reaction. This chain is Acetate kinase, found in Streptomyces coelicolor (strain ATCC BAA-471 / A3(2) / M145).